Reading from the N-terminus, the 137-residue chain is Peptide methionine sulfoxide reductase MsrB (137 aa).

In terms of domain architecture, MsrB spans 7-129 (AEELKKKLSE…NSASLAFSDE (123 aa)). Positions 46, 49, 95, and 98 each coordinate Zn(2+). The active-site Nucleophile is the Cys-118.

This sequence belongs to the MsrB Met sulfoxide reductase family. Zn(2+) serves as cofactor.

It carries out the reaction L-methionyl-[protein] + [thioredoxin]-disulfide + H2O = L-methionyl-(R)-S-oxide-[protein] + [thioredoxin]-dithiol. The sequence is that of Peptide methionine sulfoxide reductase MsrB from Salmonella agona (strain SL483).